Here is a 265-residue protein sequence, read N- to C-terminus: Type III pantothenate kinase (265 aa).

6-13 is a binding site for ATP; that stretch reads DVGNTNIV. Residue 112–115 coordinates substrate; the sequence is GADR. Aspartate 114 functions as the Proton acceptor in the catalytic mechanism. Aspartate 134 contacts K(+). Threonine 137 contributes to the ATP binding site. A substrate-binding site is contributed by threonine 189.

Belongs to the type III pantothenate kinase family. As to quaternary structure, homodimer. Requires NH4(+) as cofactor. The cofactor is K(+).

Its subcellular location is the cytoplasm. The enzyme catalyses (R)-pantothenate + ATP = (R)-4'-phosphopantothenate + ADP + H(+). Its pathway is cofactor biosynthesis; coenzyme A biosynthesis; CoA from (R)-pantothenate: step 1/5. Its function is as follows. Catalyzes the phosphorylation of pantothenate (Pan), the first step in CoA biosynthesis. This Saccharopolyspora erythraea (strain ATCC 11635 / DSM 40517 / JCM 4748 / NBRC 13426 / NCIMB 8594 / NRRL 2338) protein is Type III pantothenate kinase.